The sequence spans 264 residues: MFEARLIQGSNLKKVQEALKDIVTEASWDCTSSGISLQAMDSSHVSLVQLTLRADGFENFRCDRNLAMGINMTSMAKIMKCAGNDDIITLRAEDNADMLELIFESSKGDKYSQYEMKLMDLDCEQLGIPEQDYSCCVTLPSQEFGRICRDLSQIGECVVITCTKDGVQFSAKGDLGAGKIKLKQNTGSDIKEEEQVTVEISEPVQLTFAIKYLNLFAKASPLSPSVCLSMSNNVPLVVEYKVADMGHIKYFLAPKIEDEEEQDS.

The DNA-binding element occupies 61 to 80; it reads RCDRNLAMGINMTSMAKIMK.

It belongs to the PCNA family. Homotrimer. Forms a complex with activator 1 heteropentamer in the presence of ATP.

The protein localises to the nucleus. In terms of biological role, this protein is an auxiliary protein of DNA polymerase delta and is involved in the control of eukaryotic DNA replication by increasing the polymerase's processibility during elongation of the leading strand. This Styela clava (Sea squirt) protein is Proliferating cell nuclear antigen (PCNA).